A 267-amino-acid polypeptide reads, in one-letter code: Shikimate dehydrogenase (NADP(+)) (267 aa).

Residues 14–16 and T61 each bind shikimate; that span reads SLS. Residue K65 is the Proton acceptor of the active site. Residues N86 and D101 each coordinate shikimate. Residues 126–130, 150–155, and L213 contribute to the NADP(+) site; these read GAGGA and NRTHSK. Residue Y215 participates in shikimate binding. G236 contributes to the NADP(+) binding site.

This sequence belongs to the shikimate dehydrogenase family. Homodimer.

It catalyses the reaction shikimate + NADP(+) = 3-dehydroshikimate + NADPH + H(+). It functions in the pathway metabolic intermediate biosynthesis; chorismate biosynthesis; chorismate from D-erythrose 4-phosphate and phosphoenolpyruvate: step 4/7. Involved in the biosynthesis of the chorismate, which leads to the biosynthesis of aromatic amino acids. Catalyzes the reversible NADPH linked reduction of 3-dehydroshikimate (DHSA) to yield shikimate (SA). The protein is Shikimate dehydrogenase (NADP(+)) of Vesicomyosocius okutanii subsp. Calyptogena okutanii (strain HA).